A 130-amino-acid chain; its full sequence is Small ribosomal subunit protein uS8 (130 aa).

An N6-succinyllysine modification is found at lysine 88.

The protein belongs to the universal ribosomal protein uS8 family. Component of the small ribosomal subunit. Part of the small subunit (SSU) processome, composed of more than 70 proteins and the RNA chaperone small nucleolar RNA (snoRNA) U3.

It localises to the cytoplasm. Its subcellular location is the nucleus. It is found in the nucleolus. In terms of biological role, component of the small ribosomal subunit. The ribosome is a large ribonucleoprotein complex responsible for the synthesis of proteins in the cell. Part of the small subunit (SSU) processome, first precursor of the small eukaryotic ribosomal subunit. During the assembly of the SSU processome in the nucleolus, many ribosome biogenesis factors, an RNA chaperone and ribosomal proteins associate with the nascent pre-rRNA and work in concert to generate RNA folding, modifications, rearrangements and cleavage as well as targeted degradation of pre-ribosomal RNA by the RNA exosome. Required for proper erythropoiesis. The sequence is that of Small ribosomal subunit protein uS8 (Rps15a) from Mus musculus (Mouse).